The sequence spans 447 residues: GTPase Der (447 aa).

EngA-type G domains lie at Lys-4–Glu-165 and Leu-180–Asn-357. Residues Gly-10–Ser-17, Asp-57–Leu-61, Asn-119–Glu-122, Gly-186–Ser-193, Asp-233–Leu-237, and Asn-298–Asp-301 each bind GTP. The 86-residue stretch at Lys-358–Lys-443 folds into the KH-like domain.

It belongs to the TRAFAC class TrmE-Era-EngA-EngB-Septin-like GTPase superfamily. EngA (Der) GTPase family. As to quaternary structure, associates with the 50S ribosomal subunit.

Functionally, GTPase that plays an essential role in the late steps of ribosome biogenesis. The chain is GTPase Der from Rickettsia prowazekii (strain Madrid E).